The sequence spans 513 residues: Cytochrome P450 monooxygenase orf3 (513 aa).

Residues 11–31 (LVALGLIAATIIIYSFTLTVY) traverse the membrane as a helical segment. N-linked (GlcNAc...) asparagine glycans are attached at residues Asn-211 and Asn-351. Cys-455 is a heme binding site.

Belongs to the cytochrome P450 family. It depends on heme as a cofactor.

It localises to the membrane. It participates in mycotoxin biosynthesis. Cytochrome P450 monooxygenase; part of the gene cluster that mediates the biosynthesis of brefeldin A (BFA), a protein transport inhibitor that shows antiviral, antifungal, and antitumor properties. The proposed biosynthesis of BFA involves formation of an acyclic polyketide chain that is differentially tailored throughout the backbone. The highly reducing polyketide synthase Bref-PKS is proposed to synthesize the precisely reduced octaketide precursor, which could then be directly offloaded by the thiohydrolase enzyme Bref-TH followed by a cytochrome P450 monooxygenase-mediated formation of the cyclopentane ring and macrocyclization to afford 7-deoxy BFA. Alternatively, the first ring annulation can also occur on the ACP-tethered intermediate before the thiohydrolase release and lactonization. The C7-hydroxylation by another cytochrome P450 monooxygenase is believed to be the final step in the process to obtain the final structure of BFA. In addition to the HRPKS Bref-PKS and the thiohydrolase Bref-TH, the brefeldin A biosynthesis cluster contains 4 cytochrome p450 monooxygenases (called orf3 to orf6), as well a the probable cluster-specific transcription regulator orf8. The protein is Cytochrome P450 monooxygenase orf3 of Eupenicillium brefeldianum (Penicillium brefeldianum).